Consider the following 119-residue polypeptide: NADH-quinone oxidoreductase subunit A (119 aa).

Helical transmembrane passes span 7 to 27 (FPVLLFLIVGTGLGVALVSIG), 63 to 83 (LVAILFIIFDLETAFLFPWGV), and 88 to 108 (IGWPGFMAMMIFLLEFLLGFA).

This sequence belongs to the complex I subunit 3 family. As to quaternary structure, NDH-1 is composed of 14 different subunits. Subunits NuoA, H, J, K, L, M, N constitute the membrane sector of the complex.

The protein localises to the cell inner membrane. The catalysed reaction is a quinone + NADH + 5 H(+)(in) = a quinol + NAD(+) + 4 H(+)(out). Its function is as follows. NDH-1 shuttles electrons from NADH, via FMN and iron-sulfur (Fe-S) centers, to quinones in the respiratory chain. The immediate electron acceptor for the enzyme in this species is believed to be ubiquinone. Couples the redox reaction to proton translocation (for every two electrons transferred, four hydrogen ions are translocated across the cytoplasmic membrane), and thus conserves the redox energy in a proton gradient. The chain is NADH-quinone oxidoreductase subunit A from Paraburkholderia xenovorans (strain LB400).